The primary structure comprises 1306 residues: Disease resistance protein Roq1 (1306 aa).

One can recognise a TIR domain in the interval 10–179 (RSYDVFLSFR…QILKDIFDKF (170 aa)). Residues 19–24 (RGEDTR) and G52 each bind NAD(+). E86 is a catalytic residue. An NB-ARC domain is found at 198 to 417 (KKLSSLLRMD…IDRLKDNPEG (220 aa)). LRR repeat units lie at residues 200 to 224 (LSSL…GVGK), 252 to 275 (LQHH…EFVD), 417 to 440 (GEIM…IFLD), 599 to 622 (PSKL…AKRL), 645 to 669 (ITNL…VGFL), 670 to 693 (KNLI…IQSE), 716 to 739 (MTHL…IEHL), 741 to 763 (SLEN…IWRF), 784 to 807 (SNCT…IGNL), 808 to 831 (TSLN…IWGL), 832 to 857 (TSLT…AINH), 878 to 902 (LDLL…IWML), 904 to 926 (FLRI…LGHL), 927 to 949 (EHLE…VARL), 961 to 983 (FAIG…VFGS), 987 to 1010 (LGSV…MNQL), 1013 to 1036 (LEYL…SIKE), and 1045 to 1070 (LRIM…EYQN).

It belongs to the disease resistance TIR-NB-LRR family. In terms of assembly, homodimer.

It carries out the reaction NAD(+) + H2O = ADP-D-ribose + nicotinamide + H(+). The catalysed reaction is NAD(+) = 2'cADPR + nicotinamide + H(+). In terms of biological role, disease resistance (R) protein that specifically recognizes the Xanthomonas and Pseudomonas effector proteins XopQ and HopQ1, and triggers cell death. An NAD(+) hydrolase (NADase): in response to activation, catalyzes cleavage of NAD(+) into ADP-D-ribose (ADPR) and nicotinamide; NAD(+) cleavage triggers a defense system that promotes cell death. Makes small amounts of 2' cyclic ADPR (2'cADPR). This Nicotiana benthamiana protein is Disease resistance protein Roq1.